We begin with the raw amino-acid sequence, 192 residues long: Ion-translocating oxidoreductase complex subunit A (192 aa).

The next 6 membrane-spanning stretches (helical) occupy residues alanine 5–leucine 25, threonine 39–valine 59, alanine 65–valine 85, valine 102–leucine 122, alanine 134–isoleucine 154, and alanine 171–valine 191.

It belongs to the NqrDE/RnfAE family. The complex is composed of six subunits: RnfA, RnfB, RnfC, RnfD, RnfE and RnfG.

It is found in the cell inner membrane. Part of a membrane-bound complex that couples electron transfer with translocation of ions across the membrane. In Thioalkalivibrio sulfidiphilus (strain HL-EbGR7), this protein is Ion-translocating oxidoreductase complex subunit A.